The primary structure comprises 382 residues: Inactive ubiquitin-specific protease 5 (382 aa).

Residues 16 to 141 form the DUSP domain; it reads VPAEEERALI…GGPTLPRKAI (126 aa). Positions 323-382 constitute a USP domain; the sequence is TGLLNLGNTCFMNSAIQCLVHTPEFARYFREDYHREINWQNPLGMVVSTLSTSMALKPYV.

This sequence belongs to the peptidase C19 family. As to expression, widely expressed with the highest expression in floral organs.

The protein localises to the cell membrane. Its function is as follows. Plays an important role in the development of floral organs and chloroplasts. Does not possess deubiquitinating enzyme activity in vitro. This is Inactive ubiquitin-specific protease 5 from Oryza sativa subsp. japonica (Rice).